Consider the following 752-residue polypeptide: MENLESRLKNAPYFRCEKGTDSIPLCRKCETRVLAWKIFSTKEWFCRINDISQRRFLVGILKQLNSLYLLHYFQNILQTTQGKDFIYNRSRIDLSKKEGKVVKSSLNQMLDKTVEQKMKEILYWFANSTQWTKANYTLLLLQMCNPKLLLTAANVIRVLFLREENNISGLNQDITDVCFSPEKDHSSKSATSQVYWTAKTQHTSLPLSKAPENEHFLGAASNPEEPWRNSLRCISEMNRLFSGKADITKPGYDPCNLLVDLDDIRDLSSGFSKYRDFIRYLPIHLSKYILRMLDRHTLNKCASVSQHWAAMAQQVKMDLSAHGFIQNQITFLQGSYTRGIDPNYANKVSIPVPKMVDDGKSMRVKHPKWKLRTKNEYNLWTAYQNEETQQVLMEERNVFCGTYNVRILSDTWDQNRVIHYSGGDLIAVSSNRKIHLLDIIQVKAIPVEFRGHAGSVRALFLCEEENFLLSGSYDLSIRYWDLKSGVCTRIFGGHQGTITCMDLCKNRLVSGGRDCQVKVWDVDTGKCLKTFRHKDPILATRINDTYIVSSCERGLVKVWHIAMAQLVKTLSGHEGAVKCLFFDQWHLLSGSTDGLVMAWSMVGKYERCLMAFKHPKEVLDVSLLFLRVISACADGKIRIYNFFNGNCMKVIKANGRGDPVLSFFIQGNRISVCHISTFAKRINVGWNGIEPSATAQGGNASLTECAHVRLHIAGHLPASRLPVAAVQPMTGGMAPTTAPTHVLAMLILFSGV.

WD repeat units follow at residues 169-206 (GLNQDITDVCFSPEKDHSSKSATSQVYWTAKTQHTSLP), 451-490 (GHAGSVRALFLCEEENFLLSGSYDLSIRYWDLKSGVCTRI), 493-532 (GHQGTITCMDLCKNRLVSGGRDCQVKVWDVDTGKCLKTFR), 534-569 (KDPILATRINDTYIVSSCERGLVKVWHIAMAQLVKT), 572-609 (GHEGAVKCLFFDQWHLLSGSTDGLVMAWSMVGKYERCL), and 611-652 (AFKH…KVIK).

Expressed in pancreas, heart and skeletal muscle.

The chain is F-box and WD repeat domain containing protein 10B from Homo sapiens (Human).